Reading from the N-terminus, the 206-residue chain is Methylthioribulose-1-phosphate dehydratase (206 aa).

Zn(2+) contacts are provided by histidine 96 and histidine 98.

It belongs to the aldolase class II family. MtnB subfamily. Zn(2+) serves as cofactor.

The enzyme catalyses 5-(methylsulfanyl)-D-ribulose 1-phosphate = 5-methylsulfanyl-2,3-dioxopentyl phosphate + H2O. It participates in amino-acid biosynthesis; L-methionine biosynthesis via salvage pathway; L-methionine from S-methyl-5-thio-alpha-D-ribose 1-phosphate: step 2/6. Its function is as follows. Catalyzes the dehydration of methylthioribulose-1-phosphate (MTRu-1-P) into 2,3-diketo-5-methylthiopentyl-1-phosphate (DK-MTP-1-P). In Exiguobacterium sibiricum (strain DSM 17290 / CCUG 55495 / CIP 109462 / JCM 13490 / 255-15), this protein is Methylthioribulose-1-phosphate dehydratase.